The sequence spans 484 residues: Ribosome biogenesis protein YTM1 (484 aa).

The ubiquitin-like (UBL) domain stretch occupies residues 13 to 95 (VKVTFTTTEA…ESNLTLQYVR (83 aa)). 7 WD repeats span residues 122-161 (SPSG…IATS), 168-206 (GHTA…HFSG), 216-255 (GHTG…APEA), 288-328 (IHSA…VVTT), 330-373 (STSH…ATTS), 379-419 (GHAN…PATQ), and 448-484 (GEGC…VVAE).

It belongs to the WD repeat WDR12/YTM1 family. In terms of assembly, component of the NOP7 complex, composed of ERB1, NOP7 and YTM1. The complex is held together by ERB1, which interacts with NOP7 via its N-terminal domain and with YTM1 via a high-affinity interaction between the seven-bladed beta-propeller domains of the 2 proteins. The NOP7 complex associates with the 66S pre-ribosome. Interacts (via UBL domain) with MDN1 (via VWFA/MIDAS domain).

It localises to the nucleus. It is found in the nucleolus. The protein resides in the nucleoplasm. Its function is as follows. Component of the NOP7 complex, which is required for maturation of the 25S and 5.8S ribosomal RNAs and formation of the 60S ribosome. The chain is Ribosome biogenesis protein YTM1 from Chaetomium globosum (strain ATCC 6205 / CBS 148.51 / DSM 1962 / NBRC 6347 / NRRL 1970) (Soil fungus).